Consider the following 205-residue polypeptide: Polyamine-modulated factor 1 (205 aa).

Residues 1-28 (MAEASSVNVGSGCAEKGPEELSQEPARP) form a disordered region. Positions 140-190 (YLLQQRDALQRRVQRQEAENRQLADAVLAGRRQLEELQLQAQARQQAWQAL) form a coiled coil.

As to quaternary structure, component of the MIS12 complex composed of MIS12, DSN1, NSL1 and PMF1. Interacts with COPS7A. Interacts via its coiled-coil domain with the leucine-zipper domain of NFE2L2. The interaction with NFE2L2 is required for the transcriptional regulation of SSAT.

It localises to the nucleus. The protein localises to the chromosome. The protein resides in the centromere. It is found in the kinetochore. Functionally, part of the MIS12 complex which is required for normal chromosome alignment and segregation and kinetochore formation during mitosis. May act as a cotranscription partner of NFE2L2 involved in regulation of polyamine-induced transcription of SSAT. This chain is Polyamine-modulated factor 1 (PMF1), found in Bos taurus (Bovine).